We begin with the raw amino-acid sequence, 626 residues long: Chaperone protein HtpG (626 aa).

Residues 1 to 341 (MRKKKFKAES…SEDLSLNISR (341 aa)) form an a; substrate-binding region. Residues 342 to 552 (EMLQHDRQLK…DGEVTIEMEK (211 aa)) are b. The segment at 553-626 (VLNAMPDSQQ…FTNDICKVMV (74 aa)) is c.

The protein belongs to the heat shock protein 90 family. As to quaternary structure, homodimer.

It is found in the cytoplasm. In terms of biological role, molecular chaperone. Has ATPase activity. This chain is Chaperone protein HtpG, found in Bacillus velezensis (strain DSM 23117 / BGSC 10A6 / LMG 26770 / FZB42) (Bacillus amyloliquefaciens subsp. plantarum).